The following is a 109-amino-acid chain: Large ribosomal subunit protein uL22 (109 aa).

Belongs to the universal ribosomal protein uL22 family. In terms of assembly, part of the 50S ribosomal subunit.

This protein binds specifically to 23S rRNA; its binding is stimulated by other ribosomal proteins, e.g. L4, L17, and L20. It is important during the early stages of 50S assembly. It makes multiple contacts with different domains of the 23S rRNA in the assembled 50S subunit and ribosome. In terms of biological role, the globular domain of the protein is located near the polypeptide exit tunnel on the outside of the subunit, while an extended beta-hairpin is found that lines the wall of the exit tunnel in the center of the 70S ribosome. This chain is Large ribosomal subunit protein uL22, found in Laribacter hongkongensis (strain HLHK9).